The chain runs to 989 residues: DEAD-box ATP-dependent RNA helicase 45 (989 aa).

2 stretches are compositionally biased toward basic and acidic residues: residues Met-1–Asp-39 and Arg-64–Lys-101. 2 disordered regions span residues Met-1–Glu-248 and Gln-305–Glu-330. Residues Leu-88 to Gln-182 adopt a coiled-coil conformation. Ser-119 carries the post-translational modification Phosphoserine. Basic and acidic residues predominate over residues Ser-134–Glu-179. At Ser-200 the chain carries Phosphoserine. Positions Glu-203–Gly-222 are enriched in basic and acidic residues. Polar residues predominate over residues Glu-230 to Glu-239. Acidic residues predominate over residues Asp-321 to Glu-330. The short motif at Gln-396 to Ala-424 is the Q motif element. Residues Leu-427–Ile-605 enclose the Helicase ATP-binding domain. ATP is bound at residue Ala-440–Thr-447. A DEAD box motif is present at residues Asp-553 to Asp-556. One can recognise a Helicase C-terminal domain in the interval Gln-590 to Ala-748.

Belongs to the DEAD box helicase family. DDX46/PRP5 subfamily.

It catalyses the reaction ATP + H2O = ADP + phosphate + H(+). This is DEAD-box ATP-dependent RNA helicase 45 (RH45) from Arabidopsis thaliana (Mouse-ear cress).